We begin with the raw amino-acid sequence, 824 residues long: Glycerol-3-phosphate acyltransferase (824 aa).

The HXXXXD motif motif lies at cysteine 302–methionine 307.

It belongs to the GPAT/DAPAT family.

The protein localises to the cell inner membrane. It catalyses the reaction sn-glycerol 3-phosphate + an acyl-CoA = a 1-acyl-sn-glycero-3-phosphate + CoA. It participates in phospholipid metabolism; CDP-diacylglycerol biosynthesis; CDP-diacylglycerol from sn-glycerol 3-phosphate: step 1/3. The polypeptide is Glycerol-3-phosphate acyltransferase (Actinobacillus pleuropneumoniae serotype 5b (strain L20)).